The primary structure comprises 185 residues: Ribosome-recycling factor (185 aa).

This sequence belongs to the RRF family.

It localises to the cytoplasm. Functionally, responsible for the release of ribosomes from messenger RNA at the termination of protein biosynthesis. May increase the efficiency of translation by recycling ribosomes from one round of translation to another. The polypeptide is Ribosome-recycling factor (Thermosipho africanus (strain TCF52B)).